Consider the following 242-residue polypeptide: Probable transcriptional regulatory protein EF_0663 (242 aa).

Residues 1 to 14 show a composition bias toward polar residues; it reads MSGHSKWSNIQGRK. Positions 1–22 are disordered; it reads MSGHSKWSNIQGRKNAQDAKRG.

The protein belongs to the TACO1 family.

Its subcellular location is the cytoplasm. The protein is Probable transcriptional regulatory protein EF_0663 of Enterococcus faecalis (strain ATCC 700802 / V583).